The chain runs to 667 residues: Probable potassium transport system protein Kup (667 aa).

12 helical membrane-spanning segments follow: residues 5 to 25 (GLLI…LYVM), 47 to 67 (ISLI…IIAL), 88 to 108 (AAWL…DGTL), 133 to 153 (VSNQ…LFSI), 164 to 184 (AFGP…LINI), 210 to 230 (AGFA…ALYS), 243 to 263 (SWPF…VWIL), 287 to 307 (LASI…LITG), 336 to 356 (IYIP…VLFF), 367 to 387 (GLSI…WLVL), 393 to 413 (LANL…MGSS), and 420 to 440 (GGYV…VWYF).

Belongs to the HAK/KUP transporter (TC 2.A.72) family.

The protein localises to the cell membrane. The catalysed reaction is K(+)(in) + H(+)(in) = K(+)(out) + H(+)(out). In terms of biological role, transport of potassium into the cell. Likely operates as a K(+):H(+) symporter. This chain is Probable potassium transport system protein Kup, found in Lactobacillus delbrueckii subsp. bulgaricus (strain ATCC 11842 / DSM 20081 / BCRC 10696 / JCM 1002 / NBRC 13953 / NCIMB 11778 / NCTC 12712 / WDCM 00102 / Lb 14).